Here is a 369-residue protein sequence, read N- to C-terminus: Glutamate 5-kinase (369 aa).

Residue K9 coordinates ATP. Residues S49, D136, and N148 each contribute to the substrate site. ATP-binding positions include 168 to 169 and 210 to 216; these read TD and TGGMLTK. Positions 275-355 constitute a PUA domain; the sequence is RGSVYVDEGA…KGVFIHRDDW (81 aa).

The protein belongs to the glutamate 5-kinase family.

The protein localises to the cytoplasm. It carries out the reaction L-glutamate + ATP = L-glutamyl 5-phosphate + ADP. The protein operates within amino-acid biosynthesis; L-proline biosynthesis; L-glutamate 5-semialdehyde from L-glutamate: step 1/2. In terms of biological role, catalyzes the transfer of a phosphate group to glutamate to form L-glutamate 5-phosphate. The polypeptide is Glutamate 5-kinase (Neisseria meningitidis serogroup C / serotype 2a (strain ATCC 700532 / DSM 15464 / FAM18)).